The primary structure comprises 581 residues: Proline--tRNA ligase (581 aa).

Belongs to the class-II aminoacyl-tRNA synthetase family. ProS type 1 subfamily. In terms of assembly, homodimer.

The protein resides in the cytoplasm. The enzyme catalyses tRNA(Pro) + L-proline + ATP = L-prolyl-tRNA(Pro) + AMP + diphosphate. Catalyzes the attachment of proline to tRNA(Pro) in a two-step reaction: proline is first activated by ATP to form Pro-AMP and then transferred to the acceptor end of tRNA(Pro). As ProRS can inadvertently accommodate and process non-cognate amino acids such as alanine and cysteine, to avoid such errors it has two additional distinct editing activities against alanine. One activity is designated as 'pretransfer' editing and involves the tRNA(Pro)-independent hydrolysis of activated Ala-AMP. The other activity is designated 'posttransfer' editing and involves deacylation of mischarged Ala-tRNA(Pro). The misacylated Cys-tRNA(Pro) is not edited by ProRS. The chain is Proline--tRNA ligase from Delftia acidovorans (strain DSM 14801 / SPH-1).